A 454-amino-acid chain; its full sequence is Putative KilA-N domain-containing protein L4 (454 aa).

The segment covering 1–12 has biased composition (basic residues); the sequence is MPQKTSKSKSSR. A disordered region spans residues 1-159; it reads MPQKTSKSKS…DVPEEEYDDN (159 aa). The span at 14 to 64 shows a compositional bias: basic and acidic residues; sequence RYIEDSDDETRGRSRNRSIEKSRSRSLDKSQKKSRDKSLTRSRSKSPEKSK. Over residues 65 to 79 the composition is skewed to basic residues; it reads SRSKSLTRSRSKSPK. Acidic residues-rich tracts occupy residues 98–123 and 130–158; these read YTTE…DEEL and ESDE…EYDD. The region spanning 172–276 is the KilA-N domain; that stretch reads EFARGKFGDF…LKVSDIVIEY (105 aa).

The protein is Putative KilA-N domain-containing protein L4 of Acanthamoeba polyphaga mimivirus (APMV).